We begin with the raw amino-acid sequence, 95 residues long: Aspartyl/glutamyl-tRNA(Asn/Gln) amidotransferase subunit C (95 aa).

The span at 55–67 shows a compositional bias: basic and acidic residues; that stretch reads ALERRNVTREDQV. A disordered region spans residues 55–83; the sequence is ALERRNVTREDQVHNSLTNDKALENAPET.

This sequence belongs to the GatC family. As to quaternary structure, heterotrimer of A, B and C subunits.

It carries out the reaction L-glutamyl-tRNA(Gln) + L-glutamine + ATP + H2O = L-glutaminyl-tRNA(Gln) + L-glutamate + ADP + phosphate + H(+). The catalysed reaction is L-aspartyl-tRNA(Asn) + L-glutamine + ATP + H2O = L-asparaginyl-tRNA(Asn) + L-glutamate + ADP + phosphate + 2 H(+). Functionally, allows the formation of correctly charged Asn-tRNA(Asn) or Gln-tRNA(Gln) through the transamidation of misacylated Asp-tRNA(Asn) or Glu-tRNA(Gln) in organisms which lack either or both of asparaginyl-tRNA or glutaminyl-tRNA synthetases. The reaction takes place in the presence of glutamine and ATP through an activated phospho-Asp-tRNA(Asn) or phospho-Glu-tRNA(Gln). In Natranaerobius thermophilus (strain ATCC BAA-1301 / DSM 18059 / JW/NM-WN-LF), this protein is Aspartyl/glutamyl-tRNA(Asn/Gln) amidotransferase subunit C.